A 635-amino-acid polypeptide reads, in one-letter code: MASKPGPLTQWPWHNLGNYKYALVAPSAAYSTYRFVTASSAAERDLLNFMVFPMLLLRLLYGQLWITVSRHQTARSKHKIVNKSLDFEQIDRERNWDDQIILTALVFYLVSATMPQAQVAPWWSTKGMVVTAVLHAGPVEFLYYWLHRALHHHWLYARYHSHHHASIVTEPITSVIHPFAEEVVYFVLLAIPILSTVATGTVSVVTANGYLVYIDFMNYLGHCNFELVPKCLFHVFPPLKYLLYTPSFHSLHHTQFRTNYSLFMPVYDYIYGTTDKSSDELYERTLQGRDEAAWRPDVVHLTHLTTPESVFHNRLGFAAVASNPLGAAASGHLLRAASAVASPLLSLFASTFRSEANRLDKLNIETWVIPRFTSHYTSKSDGYKVSRLIEKAVSDAEASGARVLTLGLLNQGYDLNRNGELYVVRKPSLKTKIVDGTSLAVAAVLNMIPQGTKDVLLLGNANKISLVLTLSLCKREIQVRMVNKELYECLKQQLQPEMQEHLVLSCSYSSKVWLVGDGVTDEEQMKAQKGSHFVPYSQFPPNKARNDCVYHCTPALLVPESFENLHVCENWLPRRVMSAWRAAGIVHALEKWDGHECGGRVTGVQKAWSAALARGFRPYDDHHHPGITHDGRGGL.

Helical transmembrane passes span 46–66 (LLNFMVFPMLLLRLLYGQLWI), 100–120 (IILTALVFYLVSATMPQAQVA), 127–147 (GMVVTAVLHAGPVEFLYYWLH), and 183–203 (VVYFVLLAIPILSTVATGTVS). Positions 139 to 273 (VEFLYYWLHR…MPVYDYIYGT (135 aa)) constitute a Fatty acid hydroxylase domain.

Belongs to the sterol desaturase family. In terms of assembly, homodimer. As to expression, expressed in germinating seeds and shoots.

It localises to the endoplasmic reticulum membrane. It catalyses the reaction a long-chain fatty aldehyde + 2 NADPH + O2 + H(+) = a long-chain alkane + formate + 2 NADP(+) + H2O. Its function is as follows. Aldehyde decarbonylase involved in the conversion of aldehydes to alkanes. Core component of a very-long-chain alkane synthesis complex. The sequence is that of Very-long-chain aldehyde decarbonylase GL1-6 from Oryza sativa subsp. japonica (Rice).